A 375-amino-acid polypeptide reads, in one-letter code: Anhydro-N-acetylmuramic acid kinase (375 aa).

12–19 (GTSLDGVD) is an ATP binding site.

This sequence belongs to the anhydro-N-acetylmuramic acid kinase family.

The catalysed reaction is 1,6-anhydro-N-acetyl-beta-muramate + ATP + H2O = N-acetyl-D-muramate 6-phosphate + ADP + H(+). The protein operates within amino-sugar metabolism; 1,6-anhydro-N-acetylmuramate degradation. Its pathway is cell wall biogenesis; peptidoglycan recycling. Functionally, catalyzes the specific phosphorylation of 1,6-anhydro-N-acetylmuramic acid (anhMurNAc) with the simultaneous cleavage of the 1,6-anhydro ring, generating MurNAc-6-P. Is required for the utilization of anhMurNAc either imported from the medium or derived from its own cell wall murein, and thus plays a role in cell wall recycling. The chain is Anhydro-N-acetylmuramic acid kinase from Mannheimia succiniciproducens (strain KCTC 0769BP / MBEL55E).